The primary structure comprises 733 residues: mRNA 3'-end-processing protein rna14 (733 aa).

The disordered stretch occupies residues 1-45 (MNSDDNVEADASSNIIKDSPKIKEQENTSTVNESDVLATSTTASS). Polar residues predominate over residues 27–45 (NTSTVNESDVLATSTTASS). HAT repeat units follow at residues 85–117 (GKHEELRETYEQMLRPFPYVPRVWVDYISSELA), 119–150 (NDFHAVELLFSRCLVKVLSVDLWTLYLSYIRR), 158–193 (QSRSTITQAYEFVINTIGVDILSGPIWSEFVDFLRS), 204–237 (QKLDHVRRIYQRAITTPIHNIEKLWRDYDAFENS), 269–302 (EGLRVYDFTFERKYTKVERIAYSRWMNWIKWEQS), and 312–344 (MLQNRIAYAFEQAMLYVPLCPQIWLDGFSYFLS). Residues 404-414 (DSKASSSSESS) are compositionally biased toward low complexity. The tract at residues 404–425 (DSKASSSSESSTDGNPQEKKLP) is disordered. One copy of the HAT 7 repeat lies at 523–557 (NDETNARALFEKAIPRIAADEAKPIYQKWLDYESN).

Its subcellular location is the nucleus. The protein resides in the cytoplasm. Functionally, component of the cleavage factor IA (CFIA) complex, which is involved in the endonucleolytic cleavage during polyadenylation-dependent pre-mRNA 3'-end formation. The chain is mRNA 3'-end-processing protein rna14 (rna14) from Schizosaccharomyces pombe (strain 972 / ATCC 24843) (Fission yeast).